The primary structure comprises 325 residues: Helicase VP6-A (325 aa).

Disordered stretches follow at residues 1–126 (MLLA…TNGR) and 175–231 (GVAE…PARI). 4 stretches are compositionally biased toward basic and acidic residues: residues 8–18 (VIKRSSEELKQ), 32–54 (EGGKEDKTEPKEESKAEGSKDGE), 61–79 (GQKEEGGKETKDADVDRRI), and 92–105 (PGERANENADRGDG). K106 provides a ligand contact to ATP. The segment covering 106-122 (KVGGGGGDADAGVGATG) has biased composition (gly residues). The segment covering 175 to 229 (GVAEQTERLRDLRRKEKNGTHAKAVERGGRKQRKESHGDAQREGVEEEKTSEEPA) has biased composition (basic and acidic residues).

Belongs to the orbivirus VP6 family. In terms of assembly, homohexamer.

It localises to the virion. It catalyses the reaction ATP + H2O = ADP + phosphate + H(+). Functionally, ATP dependent RNA helicase essential for RNA packaging and viral transcription. Possesses ss- and dsRNA-binding capacity. In Bluetongue virus 11 (isolate USA) (BTV 11), this protein is Helicase VP6-A (Segment-9).